A 388-amino-acid polypeptide reads, in one-letter code: Processive diacylglycerol beta-glucosyltransferase (388 aa).

It belongs to the glycosyltransferase 28 family. UgtP subfamily.

It is found in the cell membrane. It catalyses the reaction a 1,2-diacyl-3-O-(beta-D-glucopyranosyl)-sn-glycerol + UDP-alpha-D-glucose = a 1,2-diacyl-3-O-(beta-D-Glc-(1-&gt;6)-beta-D-Glc)-sn-glycerol + UDP + H(+). It carries out the reaction a 1,2-diacyl-3-O-(beta-D-Glc-(1-&gt;6)-beta-D-Glc)-sn-glycerol + UDP-alpha-D-glucose = a 1,2-diacyl-3-O-(beta-D-Glc-(1-&gt;6)-beta-D-Glc-(1-&gt;6)-beta-D-Glc)-sn-glycerol + UDP + H(+). The catalysed reaction is a 1,2-diacyl-sn-glycerol + UDP-alpha-D-glucose = a 1,2-diacyl-3-O-(beta-D-glucopyranosyl)-sn-glycerol + UDP + H(+). Its pathway is glycolipid metabolism; diglucosyl-diacylglycerol biosynthesis. In terms of biological role, processive glucosyltransferase involved in the biosynthesis of both the bilayer- and non-bilayer-forming membrane glucolipids. Is able to successively transfer up to three glucosyl residues to diacylglycerol (DAG), thereby catalyzing the formation of beta-monoglucosyl-DAG (3-O-(beta-D-glucopyranosyl)-1,2-diacyl-sn-glycerol), beta-diglucosyl-DAG (3-O-(beta-D-glucopyranosyl-beta-(1-&gt;6)-D-glucopyranosyl)-1,2-diacyl-sn-glycerol) and beta-triglucosyl-DAG (3-O-(beta-D-glucopyranosyl-beta-(1-&gt;6)-D-glucopyranosyl-beta-(1-&gt;6)-D-glucopyranosyl)-1,2-diacyl-sn-glycerol). Beta-diglucosyl-DAG is the predominant glycolipid found in Bacillales and is also used as a membrane anchor for lipoteichoic acid (LTA). The sequence is that of Processive diacylglycerol beta-glucosyltransferase from Bacillus cereus (strain ATCC 14579 / DSM 31 / CCUG 7414 / JCM 2152 / NBRC 15305 / NCIMB 9373 / NCTC 2599 / NRRL B-3711).